Consider the following 294-residue polypeptide: Osteopontin (294 aa).

The signal sequence occupies residues 1-16 (MRLAVICFCLFGIASS). Residues Ser-24, Ser-26, Ser-27, Ser-61, Ser-62, Ser-75, Ser-77, Ser-80, Ser-106, Ser-109, Ser-112, Ser-115, and Ser-118 each carry the phosphoserine modification. Residues 42 to 274 (WLVPDPSQKQ…LVLDPKSKED (233 aa)) form a disordered region. A compositionally biased stretch (polar residues) spans 48-61 (SQKQNLLAPQNAVS). Residues 85–110 (DDDDDDDDDDGDHAESEDSVDSDESD) are compositionally biased toward acidic residues. Positions 121 to 130 (TVTASTQADT) are enriched in polar residues. O-linked (GalNAc...) threonine glycosylation is found at Thr-123, Thr-132, and Thr-137. The short motif at 144-146 (RGD) is the Cell attachment site element. Residues Thr-170 and Thr-175 each carry the phosphothreonine modification. Residues 174 to 187 (LTSHMKSGESKESL) show a composition bias toward basic and acidic residues. Phosphoserine is present on residues Ser-176, Ser-180, Ser-200, Ser-209, Ser-213, and Ser-219. The span at 197–216 (SMPSDQDNNGKGSHESSQLD) shows a compositional bias: polar residues. A glycan (O-linked (Xyl...) (chondroitin sulfate) serine) is linked at Ser-219. The segment covering 220–232 (LETHRLEHSKESQ) has biased composition (basic and acidic residues). Thr-222 bears the Phosphothreonine mark. 14 positions are modified to phosphoserine: Ser-228, Ser-231, Ser-234, Ser-238, Ser-243, Ser-247, Ser-250, Ser-255, Ser-260, Ser-271, Ser-283, Ser-288, Ser-290, and Ser-291. Residues 234 to 249 (SADQSDVIDSQASSKA) are compositionally biased toward polar residues. The span at 263-274 (DKLVLDPKSKED) shows a compositional bias: basic and acidic residues. The O-linked (Xyl...) (chondroitin sulfate) serine glycan is linked to Ser-288.

This sequence belongs to the osteopontin family. As to quaternary structure, interacts (via N-terminus) with integrin ITGA9:ITGB1. In terms of processing, extensively phosphorylated by FAM20C in the extracellular medium at multiple sites within the S-x-E/pS motif. The phosphorylated form inhibits hydroxyapatite crystallization. Dephosphorylation via a mechanism involving ALPL/TNAP promotes hydroxyapatite crystallization. O-glycosylated. Post-translationally, forms covalent cross-links mediated by transglutaminase TGM2, between a glutamine and the epsilon-amino group of a lysine residue, forming homopolymers and heteropolymers, increasing its collagen binding properties.

It localises to the secreted. Its function is as follows. Major non-collagenous bone protein that binds tightly to hydroxyapatite. Appears to form an integral part of the mineralized matrix. Probably important to cell-matrix interaction. In terms of biological role, acts as a cytokine involved in enhancing production of interferon-gamma and interleukin-12 and reducing production of interleukin-10 and is essential in the pathway that leads to type I immunity. The sequence is that of Osteopontin (Spp1) from Mus musculus (Mouse).